The chain runs to 89 residues: Acylphosphatase (89 aa).

The Acylphosphatase-like domain occupies 3–89; sequence ALEIYVSGNV…ENYESFEVAY (87 aa). Active-site residues include Arg-18 and Asn-36.

It belongs to the acylphosphatase family.

It carries out the reaction an acyl phosphate + H2O = a carboxylate + phosphate + H(+). This is Acylphosphatase (acyP) from Archaeoglobus fulgidus (strain ATCC 49558 / DSM 4304 / JCM 9628 / NBRC 100126 / VC-16).